A 210-amino-acid chain; its full sequence is uncharacterized protein (210 aa).

A signal peptide spans 1-17 (MKRTAVSLCLLTGLLSG). A lipid anchor (N-palmitoyl cysteine) is attached at Cys18. Cys18 carries S-diacylglycerol cysteine lipidation. Polar residues predominate over residues 176-195 (EMKTSPQGSPVSENENANGE). Positions 176 to 210 (EMKTSPQGSPVSENENANGETRQDMKIDRNDKNAR) are disordered. The span at 196-210 (TRQDMKIDRNDKNAR) shows a compositional bias: basic and acidic residues.

It localises to the cell membrane. This is an uncharacterized protein from Bacillus subtilis (strain 168).